The following is a 79-amino-acid chain: MAIRVSHKSFLVALLLILFISSPTQARSLREVVRNRTLLVVEKSQESRKIRHEGGGSDVDGLMDMDYNSANKKRPIHNR.

Positions 1-26 (MAIRVSHKSFLVALLLILFISSPTQA) are cleaved as a signal peptide. Positions 27 to 65 (RSLREVVRNRTLLVVEKSQESRKIRHEGGGSDVDGLMDM) are excised as a propeptide. The interval 49 to 79 (KIRHEGGGSDVDGLMDMDYNSANKKRPIHNR) is disordered. Residue Tyr67 is modified to Sulfotyrosine. Hydroxyproline is present on Pro75.

Belongs to the RGF family. Binds to LRR receptor-like serine/threonine-protein kinases to trigger their dimerization with SERK proteins and subsequent signaling. In terms of tissue distribution, expressed in siliques, stems, hypocotyls, shoot apex, leaves, flowers and cotyledons, and, to a lower extent, in roots.

It is found in the secreted. The protein resides in the endoplasmic reticulum. In terms of biological role, signaling peptide (root growth factor) that regulates the pattern of root growth and lateral root development by modulating the length and the number of cortical cells in the root apical meristem (RAM), and the anticlinal asymmetric cell divisions in lateral root initiation cells. Also involved in the regulation of hypocotyl bending and root gravitropism, probably by influencing the formation of auxin gradients. Maintains the postembryonic root stem cell niche. The sequence is that of Protein GOLVEN 2 from Arabidopsis thaliana (Mouse-ear cress).